The following is a 274-amino-acid chain: MQFSKMHGLGNDFMVVDAVTQNVYFSPELIRRLADRHTGVGFDQMLVVEPPYDPELDFHYRIFNADGSEVSQCGNGARCFARFVRLKGLTNKREISVSTQTGRMILSVTEDEQVCVNMGEPDFEPQTVPFRAAKAEKTYILRAAEHTVLCGVVSMGNPHCVMQVDDVSVANVALLGPVLENHERFPERANIGFMQVVSRDHIRLRVYERGAGETQACGSGACAAVAVGVVQDLLNENVHVELPGGSLHIRWQGPGHPLYMTGPATHVYDGFIHL.

Residues Asn-11, Gln-44, and Asn-64 each coordinate substrate. Cys-73 serves as the catalytic Proton donor. Residues Gly-74–Asn-75, Asn-157, Asn-190, and Glu-208–Arg-209 each bind substrate. The active-site Proton acceptor is Cys-217. Gly-218–Ser-219 is a binding site for substrate.

It belongs to the diaminopimelate epimerase family. As to quaternary structure, homodimer.

The protein resides in the cytoplasm. It carries out the reaction (2S,6S)-2,6-diaminopimelate = meso-2,6-diaminopimelate. It functions in the pathway amino-acid biosynthesis; L-lysine biosynthesis via DAP pathway; DL-2,6-diaminopimelate from LL-2,6-diaminopimelate: step 1/1. In terms of biological role, catalyzes the stereoinversion of LL-2,6-diaminopimelate (L,L-DAP) to meso-diaminopimelate (meso-DAP), a precursor of L-lysine and an essential component of the bacterial peptidoglycan. This chain is Diaminopimelate epimerase, found in Yersinia pseudotuberculosis serotype O:1b (strain IP 31758).